Here is an 87-residue protein sequence, read N- to C-terminus: Defensin-like protein 175 (87 aa).

A signal peptide spans 1 to 23 (MAKATSSLVVPIIFLVIFALVEQ). 4 cysteine pairs are disulfide-bonded: C27–C66, C36–C55, C39–C60, and C43–C62.

The protein belongs to the DEFL family.

The protein localises to the secreted. The chain is Defensin-like protein 175 from Arabidopsis thaliana (Mouse-ear cress).